Reading from the N-terminus, the 1486-residue chain is Alsin homolog (1486 aa).

RCC1 repeat units follow at residues 147-201 (QGVV…MLVA), 256-307 (HTQL…ARTL), and 308-363 (DGRL…LLNA). 6 MORN repeats span residues 744 to 765 (CGTW…DGSV), 766 to 784 (YCGE…MVIP), 789 to 804 (YVGN…HGVY), 817 to 832 (YEGN…HGVM), 839 to 853 (YVGE…GYGV), and 863 to 884 (YMGM…NRGD). The VPS9 domain maps to 1333–1486 (SRKDEMYRQN…VTSRALQKIP (154 aa)).

As to expression, in the embryo, expressed in a wide range of tissues including the epidermis and the ventral nerve cord.

Has guanine nucleotide exchange factor (GEF) activity towards Rab5. Promotes the exchange of GDP to GTP, converting inactive GDP-bound Rab5 into its active GTP-bound form. In Drosophila melanogaster (Fruit fly), this protein is Alsin homolog.